A 146-amino-acid chain; its full sequence is Benzoylsuccinyl-CoA thiolase subunit BbsA (146 aa).

Zn(2+) contacts are provided by Cys42, Cys45, Cys55, and Cys58.

It belongs to the BbsA family. As to quaternary structure, heterotetramer composed of two BbsA subunits and two BbsB subunits. Both BbsA and BbsB are essential for enzymatic activity.

It carries out the reaction (S)-2-benzoylsuccinyl-CoA + CoA = benzoyl-CoA + succinyl-CoA. It functions in the pathway xenobiotic degradation; toluene degradation. Its function is as follows. Component of the BbsAB thiolase complex, which catalyzes the thiolytic cleavage of (S)-2-benzoylsuccinyl-CoA to succinyl-CoA and benzoyl-CoA, the final step of anaerobic toluene metabolism. The BbsA subunit critically contributes to an induced-fit process for productive binding of a CoA substrate into the active site of BbsB. The protein is Benzoylsuccinyl-CoA thiolase subunit BbsA of Geobacter metallireducens (strain ATCC 53774 / DSM 7210 / GS-15).